The chain runs to 518 residues: Gypsy retrotransposon integrase-like protein 1 (518 aa).

The region spanning 130–292 (QQHLPMVGNP…TPYFQMFNRN (163 aa)) is the Integrase catalytic domain. Position 498 is a phosphoserine (Ser-498).

This Mus musculus (Mouse) protein is Gypsy retrotransposon integrase-like protein 1 (Gin1).